The sequence spans 566 residues: Lactase-like protein (566 aa).

Positions 1–20 (MKPVWVIILGWILLVPRVGT) are cleaved as a signal peptide. Residues 21 to 540 (AWRGPPEEAS…LLRHMHVASE (520 aa)) are Extracellular-facing. N-linked (GlcNAc...) asparagine glycosylation is found at asparagine 170 and asparagine 244. The chain crosses the membrane as a helical span at residues 541-561 (IVVPTVCALSILTAALMLTLL). Residues 562-566 (LRRRG) are Cytoplasmic-facing.

Belongs to the glycosyl hydrolase 1 family. Klotho subfamily. As to quaternary structure, may form dimers. As to expression, strongly expressed in the lens of the eye, where it localizes to the equatorial epithelium and outer layers of newly extending fiber cells (at protein level). May also be expressed in kidney and skin. However, another study suggests that expression is specific to eye and is minimal in other tissues.

The protein localises to the endoplasmic reticulum membrane. Functionally, plays a role in formation of the lens suture in the eye, which is important for normal optical properties of the lens. This is Lactase-like protein (Lctl) from Mus musculus (Mouse).